Consider the following 350-residue polypeptide: Glyoxylate reductase 1 (350 aa).

The residue at position 31 (threonine 31) is a Phosphothreonine. Residues 173 to 174, 252 to 254, and aspartate 278 each bind NAD(+); these read RI and TAR. The active site involves arginine 254. Glutamate 283 is an active-site residue. Histidine 301 acts as the Proton donor in catalysis. 301-304 is an NAD(+) binding site; sequence HMGT.

The protein belongs to the D-isomer specific 2-hydroxyacid dehydrogenase family.

It localises to the cytoplasm. The protein localises to the nucleus. Its subcellular location is the mitochondrion. It catalyses the reaction glycolate + NAD(+) = glyoxylate + NADH + H(+). The enzyme catalyses glycolate + NADP(+) = glyoxylate + NADPH + H(+). The catalysed reaction is (R)-glycerate + NAD(+) = 3-hydroxypyruvate + NADH + H(+). It carries out the reaction (R)-glycerate + NADP(+) = 3-hydroxypyruvate + NADPH + H(+). In terms of biological role, glyoxylate reductase that reversibly reduces glyoxylate to glycolate, or alternatively hydroxypyruvate to D-glycerate, using either NADPH or NADH as a cosubstrate. Does not act as a hydroxyisocaproate dehydrogenase even though it also has minor activity on alpha-ketoisocaproate. This chain is Glyoxylate reductase 1, found in Saccharomyces cerevisiae (strain ATCC 204508 / S288c) (Baker's yeast).